A 143-amino-acid polypeptide reads, in one-letter code: Large ribosomal subunit protein uL11 (143 aa).

The protein belongs to the universal ribosomal protein uL11 family. Part of the ribosomal stalk of the 50S ribosomal subunit. Interacts with L10 and the large rRNA to form the base of the stalk. L10 forms an elongated spine to which L12 dimers bind in a sequential fashion forming a multimeric L10(L12)X complex. Post-translationally, one or more lysine residues are methylated.

Its function is as follows. Forms part of the ribosomal stalk which helps the ribosome interact with GTP-bound translation factors. This is Large ribosomal subunit protein uL11 from Pseudomonas syringae pv. tomato (strain ATCC BAA-871 / DC3000).